A 279-amino-acid chain; its full sequence is Putative short-chain type dehydrogenase/reductase MSMEG_6031/MSMEI_5872 (279 aa).

Residue 11 to 33 (FITGAARGQGRSHAVRLAEEGAD) participates in NAD(+) binding. Lys-65 participates in a covalent cross-link: Isoglutamyl lysine isopeptide (Lys-Gln) (interchain with Q-Cter in protein Pup). Residue Ser-158 participates in substrate binding. The active-site Proton acceptor is Tyr-171.

It belongs to the short-chain dehydrogenases/reductases (SDR) family.

This chain is Putative short-chain type dehydrogenase/reductase MSMEG_6031/MSMEI_5872, found in Mycolicibacterium smegmatis (strain ATCC 700084 / mc(2)155) (Mycobacterium smegmatis).